Reading from the N-terminus, the 24-residue chain is Large ribosomal subunit protein uL30 (24 aa).

It belongs to the universal ribosomal protein uL30 family. As to quaternary structure, part of the 50S ribosomal subunit.

The polypeptide is Large ribosomal subunit protein uL30 (rpmD) (Ectopseudomonas mendocina (Pseudomonas mendocina)).